The primary structure comprises 514 residues: Antiseptic resistance protein (514 aa).

Topologically, residues 1 to 23 (MISFFTKTTDMMTSKKRWTALVV) are cytoplasmic. A helical transmembrane segment spans residues 24–41 (LAVSLFVVTMDMTILIMA). Residues 42–57 (LPELVRELEPSGTQQL) lie on the Extracellular side of the membrane. The chain crosses the membrane as a helical span at residues 58-75 (WIVDIYSLVLAGFIIPLS). The Cytoplasmic segment spans residues 76–86 (AFADKWGRKKA). A helical transmembrane segment spans residues 87–104 (LLTGFALFGLVSLAIFFA). Topologically, residues 105–112 (ESAEFVIA) are extracellular. A helical transmembrane segment spans residues 113–130 (IRFLLGIAGALIMPTTLS). Topologically, residues 131–146 (MIRVIFENPKERATAL) are cytoplasmic. Residues 147 to 164 (AVWSIASSIGAVFGPIIG) form a helical membrane-spanning segment. The Extracellular portion of the chain corresponds to 165–172 (GALLEQFS). A helical membrane pass occupies residues 173-190 (WHSAFLINVPFAIIAVVA). Residues 191–207 (GLFLLPESKLSKEKSHS) are Cytoplasmic-facing. The chain crosses the membrane as a helical span at residues 208 to 225 (WDIPSTILSIAGMIGLVW). The Extracellular segment spans residues 226–237 (SIKEFSKEGLAD). Residues 238-255 (IIPWVVIVLAITMIVIFV) form a helical membrane-spanning segment. The Cytoplasmic segment spans residues 256 to 278 (KRNLSSSDPMLDVRLFKKRSFSA). Residues 279–295 (GTIAAFMTMFAMASVLL) traverse the membrane as a helical segment. Topologically, residues 296–315 (LASQWLQVVEELSPFKAGLY) are extracellular. The helical transmembrane segment at 316–333 (LLPMAIGDMVFAPIAPGL) threads the bilayer. Residues 334–341 (AARFGPKI) are Cytoplasmic-facing. The helical transmembrane segment at 342–360 (VLPSGIGIAAIGMFIMYFF) threads the bilayer. Residues 361–369 (GHPLSYSTM) are Extracellular-facing. A helical transmembrane segment spans residues 370 to 387 (ALALILVGAGMASLAVAS). Residues 388–408 (ALIMLETPTSKAGNAAAVEES) are Cytoplasmic-facing. The chain crosses the membrane as a helical span at residues 409–426 (MYDLGNVFGVAVLGSLSS). Residues 427 to 481 (MLYRVFLDISSFSSKGIVGDLAHVAEESVVGAVEVAKATGIKQLANEAVTSFNDA) are Extracellular-facing. A helical membrane pass occupies residues 482–499 (FVATALVGGIIMIIISIV). Residues 500–514 (VYLLIPKSLDITKQK) lie on the Cytoplasmic side of the membrane.

The protein belongs to the major facilitator superfamily.

Its subcellular location is the cell membrane. In terms of biological role, confers export-mediated resistance against antiseptic and disinfectant compounds such as intercalating dyes, quaternary ammonium salts and diamidines. The sequence is that of Antiseptic resistance protein (qacA) from Staphylococcus aureus (strain Mu50 / ATCC 700699).